The following is a 293-amino-acid chain: Formamidopyrimidine-DNA glycosylase (293 aa).

Pro-2 functions as the Schiff-base intermediate with DNA in the catalytic mechanism. The active-site Proton donor is Glu-3. Lys-58 functions as the Proton donor; for beta-elimination activity in the catalytic mechanism. 3 residues coordinate DNA: His-104, Arg-123, and Lys-166. An FPG-type zinc finger spans residues 257 to 293 (AVYDRESEPCRTKGCGGVVKRFVQNGRSTFCCPKCQK). Arg-283 (proton donor; for delta-elimination activity) is an active-site residue.

This sequence belongs to the FPG family. Monomer. It depends on Zn(2+) as a cofactor.

It catalyses the reaction Hydrolysis of DNA containing ring-opened 7-methylguanine residues, releasing 2,6-diamino-4-hydroxy-5-(N-methyl)formamidopyrimidine.. The enzyme catalyses 2'-deoxyribonucleotide-(2'-deoxyribose 5'-phosphate)-2'-deoxyribonucleotide-DNA = a 3'-end 2'-deoxyribonucleotide-(2,3-dehydro-2,3-deoxyribose 5'-phosphate)-DNA + a 5'-end 5'-phospho-2'-deoxyribonucleoside-DNA + H(+). Its function is as follows. Involved in base excision repair of DNA damaged by oxidation or by mutagenic agents. Acts as a DNA glycosylase that recognizes and removes damaged bases. Has a preference for oxidized purines, such as 7,8-dihydro-8-oxoguanine (8-oxoG). Has AP (apurinic/apyrimidinic) lyase activity and introduces nicks in the DNA strand. Cleaves the DNA backbone by beta-delta elimination to generate a single-strand break at the site of the removed base with both 3'- and 5'-phosphates. The protein is Formamidopyrimidine-DNA glycosylase of Rhodopseudomonas palustris (strain BisA53).